The following is a 243-amino-acid chain: 7-cyano-7-deazaguanine synthase (243 aa).

9-19 is an ATP binding site; it reads FSGGQDSTTCL. 4 residues coordinate Zn(2+): cysteine 205, cysteine 220, cysteine 223, and cysteine 226.

Belongs to the QueC family. Requires Zn(2+) as cofactor.

It carries out the reaction 7-carboxy-7-deazaguanine + NH4(+) + ATP = 7-cyano-7-deazaguanine + ADP + phosphate + H2O + H(+). It functions in the pathway purine metabolism; 7-cyano-7-deazaguanine biosynthesis. Functionally, catalyzes the ATP-dependent conversion of 7-carboxy-7-deazaguanine (CDG) to 7-cyano-7-deazaguanine (preQ(0)). The protein is 7-cyano-7-deazaguanine synthase of Albidiferax ferrireducens (strain ATCC BAA-621 / DSM 15236 / T118) (Rhodoferax ferrireducens).